The primary structure comprises 322 residues: Ribonuclease Z (322 aa).

The Zn(2+) site is built by histidine 60, histidine 62, aspartate 64, histidine 65, histidine 140, aspartate 210, and histidine 270. The active-site Proton acceptor is aspartate 64.

This sequence belongs to the RNase Z family. As to quaternary structure, homodimer. It depends on Zn(2+) as a cofactor.

It catalyses the reaction Endonucleolytic cleavage of RNA, removing extra 3' nucleotides from tRNA precursor, generating 3' termini of tRNAs. A 3'-hydroxy group is left at the tRNA terminus and a 5'-phosphoryl group is left at the trailer molecule.. Functionally, zinc phosphodiesterase, which displays some tRNA 3'-processing endonuclease activity. Probably involved in tRNA maturation, by removing a 3'-trailer from precursor tRNA. This Methanococcus aeolicus (strain ATCC BAA-1280 / DSM 17508 / OCM 812 / Nankai-3) protein is Ribonuclease Z.